A 256-amino-acid chain; its full sequence is Probable septum site-determining protein MinC (256 aa).

Residues 105–143 (RRGATAKPEPADEAEPPVAAAAAEAVPEPAPELAPSAPT) form a disordered region. Low complexity predominate over residues 120–142 (PPVAAAAAEAVPEPAPELAPSAP).

The protein belongs to the MinC family. In terms of assembly, interacts with MinD and FtsZ.

Functionally, cell division inhibitor that blocks the formation of polar Z ring septums. Rapidly oscillates between the poles of the cell to destabilize FtsZ filaments that have formed before they mature into polar Z rings. Prevents FtsZ polymerization. The chain is Probable septum site-determining protein MinC from Burkholderia vietnamiensis (strain G4 / LMG 22486) (Burkholderia cepacia (strain R1808)).